The primary structure comprises 191 residues: dCTP deaminase, dUMP-forming (191 aa).

Residues 101–106, Asp119, 127–129, Gln148, Tyr162, and Gln174 contribute to the dCTP site; these read KSSLGR and TLE. Residue Glu129 is the Proton donor/acceptor of the active site.

Belongs to the dCTP deaminase family. Homotrimer.

It catalyses the reaction dCTP + 2 H2O = dUMP + NH4(+) + diphosphate. The protein operates within pyrimidine metabolism; dUMP biosynthesis; dUMP from dCTP: step 1/1. Bifunctional enzyme that catalyzes both the deamination of dCTP to dUTP and the hydrolysis of dUTP to dUMP without releasing the toxic dUTP intermediate. This chain is dCTP deaminase, dUMP-forming, found in Streptomyces coelicolor (strain ATCC BAA-471 / A3(2) / M145).